Here is a 355-residue protein sequence, read N- to C-terminus: Guanine nucleotide-binding protein G(i) subunit alpha-2 (355 aa).

Gly2 carries N-myristoyl glycine lipidation. A lipid anchor (S-palmitoyl cysteine) is attached at Cys3. Positions 32-355 (REVKLLLLGA…KNNLKDCGLF (324 aa)) constitute a G-alpha domain. The interval 35–48 (KLLLLGAGESGKST) is G1 motif. GTP is bound by residues 40–47 (GAGESGKS), 176–182 (LRTRVKT), 201–205 (DVGGQ), 270–273 (NKKD), and Ala327. Mg(2+) is bound by residues Ser47 and Thr182. The segment at 174 to 182 (DVLRTRVKT) is G2 motif. The tract at residues 197–206 (FKMFDVGGQR) is G3 motif. Residues 266-273 (ILFLNKKD) are G4 motif. The segment at 325–330 (TCATDT) is G5 motif.

It belongs to the G-alpha family. G(i/o/t/z) subfamily. In terms of assembly, g proteins are composed of 3 units; alpha, beta and gamma. The alpha chain contains the guanine nucleotide binding site. In this context, interacts with GNB2. Interacts with UNC5B. Interacts with GPSM1. Interacts with RGS12 and RGS14. Interacts (inactive GDP-bound form) with NUCB1 (via GBA motif); the interaction leads to activation of GNAI3. Interacts (inactive GDP-bound form) with CCDC88C/DAPLE (via GBA motif). Interacts (inactive GDP-bound form) with CCDC8A/GIV (via GBA motif). Ubiquitously expressed. Most abundant in the lung and in the spleen.

Its subcellular location is the cytoplasm. It localises to the cytoskeleton. The protein localises to the microtubule organizing center. It is found in the centrosome. The protein resides in the cell membrane. Its subcellular location is the membrane. Functionally, guanine nucleotide-binding proteins (G proteins) are involved as modulators or transducers in various transmembrane signaling systems. The G(i) proteins are involved in hormonal regulation of adenylate cyclase: they inhibit the cyclase in response to beta-adrenergic stimuli. May play a role in cell division. This Cavia porcellus (Guinea pig) protein is Guanine nucleotide-binding protein G(i) subunit alpha-2 (GNAI2).